The chain runs to 358 residues: 3-dehydroquinate synthase (358 aa).

Residues 69 to 74 (DGEAHK), 103 to 107 (GVIGD), 127 to 128 (TT), lysine 140, lysine 149, and 167 to 170 (CLRT) contribute to the NAD(+) site. Zn(2+) contacts are provided by glutamate 182, histidine 245, and histidine 262.

It belongs to the sugar phosphate cyclases superfamily. Dehydroquinate synthase family. Co(2+) serves as cofactor. It depends on Zn(2+) as a cofactor. NAD(+) is required as a cofactor.

Its subcellular location is the cytoplasm. It carries out the reaction 7-phospho-2-dehydro-3-deoxy-D-arabino-heptonate = 3-dehydroquinate + phosphate. The protein operates within metabolic intermediate biosynthesis; chorismate biosynthesis; chorismate from D-erythrose 4-phosphate and phosphoenolpyruvate: step 2/7. In terms of biological role, catalyzes the conversion of 3-deoxy-D-arabino-heptulosonate 7-phosphate (DAHP) to dehydroquinate (DHQ). In Tolumonas auensis (strain DSM 9187 / NBRC 110442 / TA 4), this protein is 3-dehydroquinate synthase.